The primary structure comprises 227 residues: MRFRQQVETCLNYWPAEGPVQRELILGTVGAYRRPIDSRPVLIQDVRGQEGTFTLDIHGFQFIKHISQHVASFDEASVLKDNMTALEAEHLLKTRWAIVNIWRPLKPVPRDPLAVSDARSFHDKDLLEIYGRVPGRQAKKDYDAATKGSGFGMLYGKYSPGQQWFYMSDMKPDEALLIKCYDSKDDGRTARRTPHTAFVDPRTRDVKVARESLELRCLVFFEDQPLA.

It belongs to the asaB hydroxylase/desaturase family.

Its pathway is secondary metabolite biosynthesis. Functionally, hydroxylase/desaturase; part of the gene cluster that mediates the biosynthesis of aspergillic acid, a hydroxamic acid-containing pyrazinone with aliphatic side chains that originates from leucine (Leu) and isoleucine (Ile). Aspergillic acid has antibiotic properties and was shown to be lethal to mice. The first step in the pathway is the production of deoxyaspergillic acid via a condensation between the Ile amine and the Leu carboxylic acid, followed by a reductive release from the protein forming the dipeptide aldehyde NH(2)-Leu-Ile-CHO, which could undergo an intermolecular cyclization resulting in a dihydropyrazinone. As the NRPS asaC lacks a condensation domain, it is improbable that it is responsible for condensation of Leu and Ile. One possibility is that asaC acts on a previously condensed dipeptide and functions as a Leu-Ile reductase to yield deoxyaspergillic acid. After asaC forms deoxyaspergillic acid, the cytochrome P450 asaD oxidizes the pyrazinone to the hydroxamic acid-containing bioactive metabolite aspergillic acid. The hydroxylase/desaturase asaB can then convert aspergillic acid to hydroxyaspergillic acid. Both aspergillic acid and hydroxyaspergillic acid can form complexes with iron producing ferriaspergillin analogs. In Aspergillus flavus (strain ATCC 200026 / FGSC A1120 / IAM 13836 / NRRL 3357 / JCM 12722 / SRRC 167), this protein is Hydroxylase/desaturase asaB.